We begin with the raw amino-acid sequence, 468 residues long: Ribulose bisphosphate carboxylase large chain (468 aa).

N6,N6,N6-trimethyllysine is present on lysine 5. Substrate contacts are provided by asparagine 114 and threonine 164. The active-site Proton acceptor is the lysine 166. Lysine 168 is a binding site for substrate. The Mg(2+) site is built by lysine 192, aspartate 194, and glutamate 195. The residue at position 192 (lysine 192) is an N6-carboxylysine. Histidine 285 (proton acceptor) is an active-site residue. Arginine 286, histidine 318, and serine 370 together coordinate substrate.

Belongs to the RuBisCO large chain family. Type I subfamily. As to quaternary structure, heterohexadecamer of 8 large chains and 8 small chains; disulfide-linked. The disulfide link is formed within the large subunit homodimers. The cofactor is Mg(2+). Post-translationally, the disulfide bond which can form in the large chain dimeric partners within the hexadecamer appears to be associated with oxidative stress and protein turnover.

The protein resides in the plastid. It localises to the chloroplast. The catalysed reaction is 2 (2R)-3-phosphoglycerate + 2 H(+) = D-ribulose 1,5-bisphosphate + CO2 + H2O. The enzyme catalyses D-ribulose 1,5-bisphosphate + O2 = 2-phosphoglycolate + (2R)-3-phosphoglycerate + 2 H(+). Functionally, ruBisCO catalyzes two reactions: the carboxylation of D-ribulose 1,5-bisphosphate, the primary event in carbon dioxide fixation, as well as the oxidative fragmentation of the pentose substrate in the photorespiration process. Both reactions occur simultaneously and in competition at the same active site. This Nolana spathulata (Chilean bell flower) protein is Ribulose bisphosphate carboxylase large chain.